Reading from the N-terminus, the 111-residue chain is Small ribosomal subunit protein uS17 (111 aa).

The protein belongs to the universal ribosomal protein uS17 family. As to quaternary structure, part of the 30S ribosomal subunit.

Its function is as follows. One of the primary rRNA binding proteins, it binds specifically to the 5'-end of 16S ribosomal RNA. The polypeptide is Small ribosomal subunit protein uS17 (Methanocella arvoryzae (strain DSM 22066 / NBRC 105507 / MRE50)).